The following is a 155-amino-acid chain: Short-chain-enoyl-CoA hydratase (155 aa).

The protein belongs to the enoyl-CoA hydratase/isomerase family.

The enzyme catalyses a short-chain (3S)-3-hydroxyacyl-CoA = a short-chain (2E)-enoyl-CoA + H2O. Its pathway is lipid metabolism; butanoate metabolism. The chain is Short-chain-enoyl-CoA hydratase (crt) from Clostridioides difficile (Peptoclostridium difficile).